Consider the following 292-residue polypeptide: Protease HtpX homolog (292 aa).

Transmembrane regions (helical) follow at residues 4–24 (IFLF…TLRL) and 42–62 (ALLV…LAMS). Residue histidine 147 coordinates Zn(2+). The active site involves glutamate 148. Histidine 151 is a binding site for Zn(2+). The next 2 membrane-spanning stretches (helical) occupy residues 158-178 (VTLA…SRII) and 198-218 (FVTS…IVMW). Zn(2+) is bound at residue glutamate 224.

The protein belongs to the peptidase M48B family. It depends on Zn(2+) as a cofactor.

Its subcellular location is the cell inner membrane. The protein is Protease HtpX homolog of Nitrosomonas eutropha (strain DSM 101675 / C91 / Nm57).